A 123-amino-acid polypeptide reads, in one-letter code: Small ribosomal subunit protein uS12 (123 aa).

The residue at position 89 (aspartate 89) is a 3-methylthioaspartic acid.

The protein belongs to the universal ribosomal protein uS12 family. In terms of assembly, part of the 30S ribosomal subunit. Contacts proteins S8 and S17. May interact with IF1 in the 30S initiation complex.

In terms of biological role, with S4 and S5 plays an important role in translational accuracy. Its function is as follows. Interacts with and stabilizes bases of the 16S rRNA that are involved in tRNA selection in the A site and with the mRNA backbone. Located at the interface of the 30S and 50S subunits, it traverses the body of the 30S subunit contacting proteins on the other side and probably holding the rRNA structure together. The combined cluster of proteins S8, S12 and S17 appears to hold together the shoulder and platform of the 30S subunit. The protein is Small ribosomal subunit protein uS12 of Bartonella tribocorum (strain CIP 105476 / IBS 506).